Here is an 828-residue protein sequence, read N- to C-terminus: Periplasmic nitrate reductase (828 aa).

The segment at residues 1–31 (MKLSRRSFMKANAVAAAAAAAGLSVPGVARA) is a signal peptide (tat-type signal). Residues 39–95 (IKWDKAPCRFCGTGCGVLVGTQQGRVVACQGDPDAPVNRGLNCIKGYFLPKIMYGKD) form the 4Fe-4S Mo/W bis-MGD-type domain. [4Fe-4S] cluster-binding residues include Cys-46, Cys-49, Cys-53, and Cys-81. Mo-bis(molybdopterin guanine dinucleotide) is bound by residues Lys-83, Gln-150, Asn-175, Cys-179, 212-219 (WGANMAEM), 243-247 (STYQH), 262-264 (QSD), Met-372, Gln-376, Asn-482, 508-509 (SD), Lys-531, Asp-558, and 718-727 (TGRVLEHWHT). Phe-794 provides a ligand contact to substrate. Asn-802 and Lys-819 together coordinate Mo-bis(molybdopterin guanine dinucleotide).

Belongs to the prokaryotic molybdopterin-containing oxidoreductase family. NasA/NapA/NarB subfamily. Component of the periplasmic nitrate reductase NapAB complex composed of NapA and NapB. It depends on [4Fe-4S] cluster as a cofactor. Mo-bis(molybdopterin guanine dinucleotide) serves as cofactor. Predicted to be exported by the Tat system. The position of the signal peptide cleavage has not been experimentally proven.

The protein localises to the periplasm. It carries out the reaction 2 Fe(II)-[cytochrome] + nitrate + 2 H(+) = 2 Fe(III)-[cytochrome] + nitrite + H2O. In terms of biological role, catalytic subunit of the periplasmic nitrate reductase complex NapAB. Receives electrons from NapB and catalyzes the reduction of nitrate to nitrite. The protein is Periplasmic nitrate reductase of Shigella boydii serotype 18 (strain CDC 3083-94 / BS512).